Reading from the N-terminus, the 385-residue chain is 1-deoxy-D-xylulose 5-phosphate reductoisomerase (385 aa).

Positions 10, 11, 12, 13, 36, 38, and 121 each coordinate NADPH. K122 is a binding site for 1-deoxy-D-xylulose 5-phosphate. An NADPH-binding site is contributed by E123. D147 serves as a coordination point for Mn(2+). S148, E149, S173, and H196 together coordinate 1-deoxy-D-xylulose 5-phosphate. Residue E149 participates in Mn(2+) binding. Position 202 (G202) interacts with NADPH. 1-deoxy-D-xylulose 5-phosphate contacts are provided by S209, N214, K215, and E218. E218 lines the Mn(2+) pocket.

The protein belongs to the DXR family. Mg(2+) serves as cofactor. It depends on Mn(2+) as a cofactor.

It carries out the reaction 2-C-methyl-D-erythritol 4-phosphate + NADP(+) = 1-deoxy-D-xylulose 5-phosphate + NADPH + H(+). It functions in the pathway isoprenoid biosynthesis; isopentenyl diphosphate biosynthesis via DXP pathway; isopentenyl diphosphate from 1-deoxy-D-xylulose 5-phosphate: step 1/6. In terms of biological role, catalyzes the NADPH-dependent rearrangement and reduction of 1-deoxy-D-xylulose-5-phosphate (DXP) to 2-C-methyl-D-erythritol 4-phosphate (MEP). This is 1-deoxy-D-xylulose 5-phosphate reductoisomerase from Exiguobacterium sp. (strain ATCC BAA-1283 / AT1b).